The sequence spans 194 residues: Potassium-transporting ATPase KdpC subunit (194 aa).

A helical membrane pass occupies residues 12–34; sequence LFLLLLTGGVYPLLTTALGQWWF.

The protein belongs to the KdpC family. In terms of assembly, the system is composed of three essential subunits: KdpA, KdpB and KdpC.

The protein resides in the cell inner membrane. Its function is as follows. Part of the high-affinity ATP-driven potassium transport (or Kdp) system, which catalyzes the hydrolysis of ATP coupled with the electrogenic transport of potassium into the cytoplasm. This subunit acts as a catalytic chaperone that increases the ATP-binding affinity of the ATP-hydrolyzing subunit KdpB by the formation of a transient KdpB/KdpC/ATP ternary complex. The sequence is that of Potassium-transporting ATPase KdpC subunit from Salmonella schwarzengrund (strain CVM19633).